We begin with the raw amino-acid sequence, 131 residues long: Small ribosomal subunit protein uS9c (131 aa).

The protein belongs to the universal ribosomal protein uS9 family.

Its subcellular location is the plastid. It is found in the chloroplast. This is Small ribosomal subunit protein uS9c (rps9) from Emiliania huxleyi (Coccolithophore).